Reading from the N-terminus, the 366-residue chain is 3-dehydroquinate synthase (366 aa).

Residues 73 to 78, 107 to 111, 131 to 132, Lys144, and Lys153 contribute to the NAD(+) site; these read DGERAK, GVVGD, and TT. Glu186, His249, and His266 together coordinate Zn(2+).

It belongs to the sugar phosphate cyclases superfamily. Dehydroquinate synthase family. Co(2+) is required as a cofactor. It depends on Zn(2+) as a cofactor. Requires NAD(+) as cofactor.

The protein localises to the cytoplasm. It carries out the reaction 7-phospho-2-dehydro-3-deoxy-D-arabino-heptonate = 3-dehydroquinate + phosphate. It participates in metabolic intermediate biosynthesis; chorismate biosynthesis; chorismate from D-erythrose 4-phosphate and phosphoenolpyruvate: step 2/7. Functionally, catalyzes the conversion of 3-deoxy-D-arabino-heptulosonate 7-phosphate (DAHP) to dehydroquinate (DHQ). The sequence is that of 3-dehydroquinate synthase from Koribacter versatilis (strain Ellin345).